Here is a 301-residue protein sequence, read N- to C-terminus: UDP-N-acetylenolpyruvoylglucosamine reductase 1 (301 aa).

The region spanning 29–196 is the FAD-binding PCMH-type domain; it reads KIGGPADILI…LEAEFQLQIG (168 aa). Arginine 174 is an active-site residue. The active-site Proton donor is serine 225. The active site involves glutamate 295.

It belongs to the MurB family. Requires FAD as cofactor.

It localises to the cytoplasm. The catalysed reaction is UDP-N-acetyl-alpha-D-muramate + NADP(+) = UDP-N-acetyl-3-O-(1-carboxyvinyl)-alpha-D-glucosamine + NADPH + H(+). The protein operates within cell wall biogenesis; peptidoglycan biosynthesis. In terms of biological role, cell wall formation. In Bacillus anthracis, this protein is UDP-N-acetylenolpyruvoylglucosamine reductase 1 (murB1).